A 627-amino-acid polypeptide reads, in one-letter code: Transducer protein MpcT (627 aa).

2 consecutive transmembrane segments (helical) span residues 28 to 48 and 55 to 75; these read MLTA…LTVF and LIGV…TYLI. HAMP domains are found at residues 78–132 and 192–247; these read ADFV…VASR and EQLR…DTIS. The 237-residue stretch at 266–502 folds into the Methyl-accepting transducer domain; that stretch reads RVDAVADRSA…DVVGMVEEVA (237 aa). Glutamate 310, glutamate 416, and glutamate 507 each carry glutamate methyl ester (Glu). 2 disordered regions span residues 505 to 527 and 557 to 627; these read SEET…DATD and GTAD…ADSQ. Low complexity predominate over residues 580-590; the sequence is AAAVVDQPQPA.

This sequence belongs to the methyl-accepting chemotaxis (MCP) protein family. Interacts with CheA, CheY and CheW1. Post-translationally, methylated by CheR.

Its subcellular location is the cell membrane. In terms of biological role, mediates bacteriorhodopsin- and halorhodopsin-dependent photoresponses by detecting membrane potential changes. Probably transduces the signal to the histidine kinase CheA. This Halobacterium salinarum (strain ATCC 29341 / DSM 671 / R1) protein is Transducer protein MpcT (mpcT).